A 330-amino-acid polypeptide reads, in one-letter code: tRNA U34 carboxymethyltransferase (330 aa).

Carboxy-S-adenosyl-L-methionine-binding positions include K91, W105, K110, G130, 152 to 154 (DPS), 181 to 182 (IE), M196, Y200, and R315.

The protein belongs to the class I-like SAM-binding methyltransferase superfamily. CmoB family. As to quaternary structure, homotetramer.

It catalyses the reaction carboxy-S-adenosyl-L-methionine + 5-hydroxyuridine(34) in tRNA = 5-carboxymethoxyuridine(34) in tRNA + S-adenosyl-L-homocysteine + H(+). Its function is as follows. Catalyzes carboxymethyl transfer from carboxy-S-adenosyl-L-methionine (Cx-SAM) to 5-hydroxyuridine (ho5U) to form 5-carboxymethoxyuridine (cmo5U) at position 34 in tRNAs. The protein is tRNA U34 carboxymethyltransferase of Shewanella woodyi (strain ATCC 51908 / MS32).